We begin with the raw amino-acid sequence, 414 residues long: Protein SOSEKI 2 (414 aa).

The tract at residues 44–135 (RRVQVVYYLT…YVLKGSEITD (92 aa)) is DIX-like oligomerization domain. The tract at residues 171-273 (SFDDAELYVG…GDPVEPGSGR (103 aa)) is disordered. Residues 173-192 (DDAELYVGEEEEEEDGEYEL) show a composition bias toward acidic residues. Over residues 205–229 (PQSRCSRGVSTETMESTEQKPNLTK) the composition is skewed to polar residues. The span at 230-242 (TEQDLQVRSDSSD) shows a compositional bias: basic and acidic residues. The Association to cell membranes signature appears at 283–284 (CG).

It belongs to the SOSEKI family. As to quaternary structure, homodimer. Forms long polymer filaments with other SOKs proteins polymers (e.g. SOK1, SOK2, SOK3 and SOK4) crucial for polar localization and biological activity. Binds to ANGUSTIFOLIA (AN). In terms of tissue distribution, expressed during embryogenesis and in roots.

The protein resides in the cell membrane. Its function is as follows. Part of a three-gene cluster containing FLC, UFC and DFC, which is coordinately regulated in response to vernalization. Also regulated by FLX. SOSEKI proteins (SOK1-5) locally interpret global polarity cues and can influence cell division orientation to coordinate cell polarization relative to body axes, probably by guiding ANGUSTIFOLIA (AN) polarized localization. The polypeptide is Protein SOSEKI 2 (Arabidopsis thaliana (Mouse-ear cress)).